Here is a 456-residue protein sequence, read N- to C-terminus: Phytase A (456 aa).

Residues 1-24 form the signal peptide; that stretch reads MSSMASVLFAALAISGVQVTPSRG. Positions 37, 38, 68, 69, 72, 75, and 152 each coordinate 1D-myo-inositol hexakisphosphate. 4 cysteine pairs are disulfide-bonded: Cys58/Cys396, Cys197/Cys450, Cys246/Cys264, and Cys421/Cys429. His69 serves as the catalytic Nucleophile. Lys283 contributes to the 1D-myo-inositol hexakisphosphate binding site. Residue Asn317 is glycosylated (N-linked (GlcNAc...) asparagine). 1D-myo-inositol hexakisphosphate contacts are provided by His343 and Asp344. N-linked (GlcNAc...) asparagine glycosylation occurs at Asn358.

It belongs to the histidine acid phosphatase family. In terms of assembly, monomer.

Its subcellular location is the secreted. It catalyses the reaction 1D-myo-inositol hexakisphosphate + H2O = 1D-myo-inositol 1,2,4,5,6-pentakisphosphate + phosphate. The enzyme catalyses 1D-myo-inositol 1,2,4,5,6-pentakisphosphate + H2O = 1D-myo-inositol 1,2,5,6-tetrakisphosphate + phosphate. The catalysed reaction is 1D-myo-inositol 1,2,5,6-tetrakisphosphate + H2O = 1D-myo-inositol 1,2,6-trisphosphate + phosphate. It carries out the reaction 1D-myo-inositol 1,2,6-trisphosphate + H2O = 1D-myo-inositol 1,2-bisphosphate + phosphate. It catalyses the reaction 1D-myo-inositol 1,2-bisphosphate + H2O = 1D-myo-inositol 2-phosphate + phosphate. Catalyzes the phosphate monoester hydrolysis of phytic acid (myo-inositol hexakisphosphate), which results in the stepwise formation of myo-inositol pentakis-, tetrakis-, tris-, bis-, and monophosphates, as well as the liberation of inorganic phosphate. Myo-inositol 2-monophosphate is the end product. This Arthroderma benhamiae (strain ATCC MYA-4681 / CBS 112371) (Trichophyton mentagrophytes) protein is Phytase A.